A 542-amino-acid polypeptide reads, in one-letter code: Chaperonin GroEL (542 aa).

ATP contacts are provided by residues 29–32 (TLGP), 86–90 (DGTTT), G413, and D492.

It belongs to the chaperonin (HSP60) family. In terms of assembly, forms a cylinder of 14 subunits composed of two heptameric rings stacked back-to-back. Interacts with the co-chaperonin GroES.

The protein resides in the cytoplasm. The catalysed reaction is ATP + H2O + a folded polypeptide = ADP + phosphate + an unfolded polypeptide.. Functionally, together with its co-chaperonin GroES, plays an essential role in assisting protein folding. The GroEL-GroES system forms a nano-cage that allows encapsulation of the non-native substrate proteins and provides a physical environment optimized to promote and accelerate protein folding. The protein is Chaperonin GroEL of Nocardia asteroides.